We begin with the raw amino-acid sequence, 598 residues long: UvrABC system protein C (598 aa).

Residues 14–91 (DSPGCYLHKD…IQKNMPKYNI (78 aa)) form the GIY-YIG domain. One can recognise a UVR domain in the interval 196 to 231 (DKIIEDLRSKMLAASEEMAFERAAEYRDLISGIATM).

It belongs to the UvrC family. Interacts with UvrB in an incision complex.

It is found in the cytoplasm. The UvrABC repair system catalyzes the recognition and processing of DNA lesions. UvrC both incises the 5' and 3' sides of the lesion. The N-terminal half is responsible for the 3' incision and the C-terminal half is responsible for the 5' incision. This chain is UvrABC system protein C, found in Streptococcus pyogenes serotype M12 (strain MGAS2096).